Here is a 499-residue protein sequence, read N- to C-terminus: Maturase K (499 aa).

It belongs to the intron maturase 2 family. MatK subfamily.

The protein resides in the plastid. The protein localises to the chloroplast. In terms of biological role, usually encoded in the trnK tRNA gene intron. Probably assists in splicing its own and other chloroplast group II introns. This chain is Maturase K, found in Ceratonia siliqua (Carob).